Here is a 280-residue protein sequence, read N- to C-terminus: DegV domain-containing protein spyM18_1709 (280 aa).

In terms of domain architecture, DegV spans 3–280 (WKIVTDSGCD…DGGLLMGYEI (278 aa)). Residues Ser63 and Ser91 each coordinate hexadecanoate.

Functionally, may bind long-chain fatty acids, such as palmitate, and may play a role in lipid transport or fatty acid metabolism. The chain is DegV domain-containing protein spyM18_1709 from Streptococcus pyogenes serotype M18 (strain MGAS8232).